The chain runs to 432 residues: Bifunctional protein GlmU (432 aa).

The interval 1–223 (MGKKSIIILA…EENFKGVNSK (223 aa)) is pyrophosphorylase. UDP-N-acetyl-alpha-D-glucosamine is bound by residues 9-12 (LAAG), Lys-23, Gln-75, and 82-83 (GT). Residue Asp-103 coordinates Mg(2+). Gly-135, Glu-149, Asn-164, and Asn-221 together coordinate UDP-N-acetyl-alpha-D-glucosamine. Mg(2+) is bound at residue Asn-221. The tract at residues 224-244 (VELADAEVIHQNRIKKEFMKA) is linker. Residues 245–432 (GVIMRLPDTI…FYKHFSSKKK (188 aa)) form an N-acetyltransferase region. UDP-N-acetyl-alpha-D-glucosamine-binding residues include Arg-308 and Lys-325. His-336 serves as the catalytic Proton acceptor. UDP-N-acetyl-alpha-D-glucosamine is bound by residues Tyr-339 and Asn-350. Acetyl-CoA contacts are provided by residues 359–360 (NY), Ser-378, Ala-396, and Arg-413.

It in the N-terminal section; belongs to the N-acetylglucosamine-1-phosphate uridyltransferase family. This sequence in the C-terminal section; belongs to the transferase hexapeptide repeat family. As to quaternary structure, homotrimer. Mg(2+) is required as a cofactor.

The protein localises to the cytoplasm. It carries out the reaction alpha-D-glucosamine 1-phosphate + acetyl-CoA = N-acetyl-alpha-D-glucosamine 1-phosphate + CoA + H(+). The catalysed reaction is N-acetyl-alpha-D-glucosamine 1-phosphate + UTP + H(+) = UDP-N-acetyl-alpha-D-glucosamine + diphosphate. It functions in the pathway nucleotide-sugar biosynthesis; UDP-N-acetyl-alpha-D-glucosamine biosynthesis; N-acetyl-alpha-D-glucosamine 1-phosphate from alpha-D-glucosamine 6-phosphate (route II): step 2/2. It participates in nucleotide-sugar biosynthesis; UDP-N-acetyl-alpha-D-glucosamine biosynthesis; UDP-N-acetyl-alpha-D-glucosamine from N-acetyl-alpha-D-glucosamine 1-phosphate: step 1/1. The protein operates within bacterial outer membrane biogenesis; LPS lipid A biosynthesis. Functionally, catalyzes the last two sequential reactions in the de novo biosynthetic pathway for UDP-N-acetylglucosamine (UDP-GlcNAc). The C-terminal domain catalyzes the transfer of acetyl group from acetyl coenzyme A to glucosamine-1-phosphate (GlcN-1-P) to produce N-acetylglucosamine-1-phosphate (GlcNAc-1-P), which is converted into UDP-GlcNAc by the transfer of uridine 5-monophosphate (from uridine 5-triphosphate), a reaction catalyzed by the N-terminal domain. This Aliarcobacter butzleri (strain RM4018) (Arcobacter butzleri) protein is Bifunctional protein GlmU.